Here is a 390-residue protein sequence, read N- to C-terminus: Transposase for insertion sequence element IS21 (390 aa).

In terms of domain architecture, HTH IS21-type spans 5-66 (EDFYMIKQMR…PFMDYIDMRL (62 aa)). The segment at residues 20–39 (IVDIATQIGCSERTVRRYLK) is a DNA-binding region (H-T-H motif). In terms of domain architecture, Integrase catalytic spans 111-285 (FETQPRYQLQ…TPEQRFALEQ (175 aa)).

The protein belongs to the transposase IS21/IS408/IS1162 family.

Its function is as follows. Involved in the transposition of the insertion sequence. This chain is Transposase for insertion sequence element IS21 (istA), found in Pseudomonas aeruginosa.